We begin with the raw amino-acid sequence, 48 residues long: Ribulose bisphosphate carboxylase large chain (48 aa).

It belongs to the RuBisCO large chain family. Type I subfamily. Heterohexadecamer of 8 large chains and 8 small chains.

It localises to the plastid. The protein resides in the chloroplast. It catalyses the reaction 2 (2R)-3-phosphoglycerate + 2 H(+) = D-ribulose 1,5-bisphosphate + CO2 + H2O. The catalysed reaction is D-ribulose 1,5-bisphosphate + O2 = 2-phosphoglycolate + (2R)-3-phosphoglycerate + 2 H(+). RuBisCO catalyzes two reactions: the carboxylation of D-ribulose 1,5-bisphosphate, the primary event in carbon dioxide fixation, as well as the oxidative fragmentation of the pentose substrate in the photorespiration process. Both reactions occur simultaneously and in competition at the same active site. The sequence is that of Ribulose bisphosphate carboxylase large chain (rbcL) from Pinus pinaster (Maritime pine).